Consider the following 119-residue polypeptide: Large ribosomal subunit protein uL24 (119 aa).

The protein belongs to the universal ribosomal protein uL24 family. In terms of assembly, part of the 50S ribosomal subunit.

In terms of biological role, one of two assembly initiator proteins, it binds directly to the 5'-end of the 23S rRNA, where it nucleates assembly of the 50S subunit. Its function is as follows. One of the proteins that surrounds the polypeptide exit tunnel on the outside of the subunit. This chain is Large ribosomal subunit protein uL24, found in Clavibacter michiganensis subsp. michiganensis (strain NCPPB 382).